Reading from the N-terminus, the 354-residue chain is Dihydroorotate dehydrogenase (quinone) (354 aa).

FMN contacts are provided by residues 61 to 65 (AGYDK) and A85. Residue K65 participates in substrate binding. 110–114 (NRFGF) serves as a coordination point for substrate. FMN-binding residues include N139 and N170. Residue N170 coordinates substrate. Residue S173 is the Nucleophile of the active site. N175 is a binding site for substrate. FMN-binding residues include K211 and T239. 240–241 (NT) contributes to the substrate binding site. Residues G261, G290, and 311 to 312 (YT) each bind FMN.

It belongs to the dihydroorotate dehydrogenase family. Type 2 subfamily. As to quaternary structure, monomer. The cofactor is FMN.

It is found in the cell membrane. The catalysed reaction is (S)-dihydroorotate + a quinone = orotate + a quinol. Its pathway is pyrimidine metabolism; UMP biosynthesis via de novo pathway; orotate from (S)-dihydroorotate (quinone route): step 1/1. Functionally, catalyzes the conversion of dihydroorotate to orotate with quinone as electron acceptor. The protein is Dihydroorotate dehydrogenase (quinone) of Cereibacter sphaeroides (strain KD131 / KCTC 12085) (Rhodobacter sphaeroides).